Here is a 58-residue protein sequence, read N- to C-terminus: Galectin-1 (58 aa).

Positions 2 to 58 constitute a Galectin domain; sequence GITXTSLHVAPGARLAVKGDIPAGAKSWVINLGKGENDIMLHFNARFDAHGDIRTIV. Residues 43–47 and H51 contribute to the a beta-D-galactoside site; that span reads HFNAR.

In terms of assembly, monomer. In terms of tissue distribution, detected in most tissues, most abundantly in skin.

Its subcellular location is the secreted. It localises to the extracellular space. It is found in the extracellular matrix. Functionally, may regulate cell apoptosis and cell differentiation. Binds beta-galactoside and a wide array of complex carbohydrates. The chain is Galectin-1 from Podarcis hispanicus (Iberian wall lizard).